A 157-amino-acid chain; its full sequence is Phosphopantetheine adenylyltransferase (157 aa).

Substrate is bound at residue T8. Residues 8 to 9 and H16 contribute to the ATP site; that span reads TF. The substrate site is built by K40, T72, and R86. ATP is bound by residues 87–89, E97, and 122–128; these read GLR and YSFLSSS.

This sequence belongs to the bacterial CoaD family. Homohexamer. The cofactor is Mg(2+).

The protein localises to the cytoplasm. The enzyme catalyses (R)-4'-phosphopantetheine + ATP + H(+) = 3'-dephospho-CoA + diphosphate. It participates in cofactor biosynthesis; coenzyme A biosynthesis; CoA from (R)-pantothenate: step 4/5. In terms of biological role, reversibly transfers an adenylyl group from ATP to 4'-phosphopantetheine, yielding dephospho-CoA (dPCoA) and pyrophosphate. The protein is Phosphopantetheine adenylyltransferase of Prochlorococcus marinus (strain MIT 9301).